Reading from the N-terminus, the 432-residue chain is Adenylosuccinate synthetase (432 aa).

Residues Gly11–Lys17 and Gly39–Thr41 each bind GTP. The Proton acceptor role is filled by Asp12. Positions 12 and 39 each coordinate Mg(2+). IMP-binding positions include Asp12–Lys15, Asn37–His40, Thr134, Arg148, Asn230, Thr245, and Arg309. His40 acts as the Proton donor in catalysis. Val305 to Arg311 contributes to the substrate binding site. Residues Arg311, Lys337–Asp339, and Gly419–Gly421 contribute to the GTP site.

This sequence belongs to the adenylosuccinate synthetase family. In terms of assembly, homodimer. The cofactor is Mg(2+).

The protein localises to the cytoplasm. The catalysed reaction is IMP + L-aspartate + GTP = N(6)-(1,2-dicarboxyethyl)-AMP + GDP + phosphate + 2 H(+). Its pathway is purine metabolism; AMP biosynthesis via de novo pathway; AMP from IMP: step 1/2. In terms of biological role, plays an important role in the de novo pathway and in the salvage pathway of purine nucleotide biosynthesis. Catalyzes the first committed step in the biosynthesis of AMP from IMP. The chain is Adenylosuccinate synthetase from Candida glabrata (strain ATCC 2001 / BCRC 20586 / JCM 3761 / NBRC 0622 / NRRL Y-65 / CBS 138) (Yeast).